A 333-amino-acid polypeptide reads, in one-letter code: Protein VTE6, chloroplastic (333 aa).

The N-terminal 65 residues, 1–65 (MATISSTLLL…SRADGATAAA (65 aa)), are a transit peptide targeting the chloroplast. 6 consecutive transmembrane segments (helical) span residues 94–114 (LLIF…SGIA), 126–146 (AYGS…TAAT), 171–191 (VIGS…QVGG), 248–268 (TLAG…LGQI), 274–294 (AVCV…GASF), and 307–327 (VVNV…QQFI).

It belongs to the TMEM19 family.

The protein resides in the plastid. It localises to the chloroplast membrane. It carries out the reaction phytyl phosphate + a ribonucleoside 5'-triphosphate = phytyl diphosphate + a ribonucleoside 5'-diphosphate. The catalysed reaction is phytyl phosphate + CTP = phytyl diphosphate + CDP. It functions in the pathway cofactor biosynthesis; tocopherol biosynthesis. Phytyl-phosphate kinase catalyzing the conversion of phytyl-monophosphate to phytyl-diphosphate. Involved in the activation and reutilization of phytol from chlorophyll degradation in plant metabolism, including tocopherol (vitamin E) biosynthesis. Involved in the biosynthesis of phylloquinone (vitamin K), which is required for the photosystem I (PSI) complex stability. This Arabidopsis thaliana (Mouse-ear cress) protein is Protein VTE6, chloroplastic.